The following is a 133-amino-acid chain: UPF0225 protein BPP1723 (133 aa).

This sequence belongs to the UPF0225 family.

This chain is UPF0225 protein BPP1723, found in Bordetella parapertussis (strain 12822 / ATCC BAA-587 / NCTC 13253).